Here is a 459-residue protein sequence, read N- to C-terminus: Glycerol-3-phosphate acyltransferase, chloroplastic (459 aa).

The N-terminal 90 residues, 1–90 (MTLTFSSSAA…FNEAAGETPS (90 aa)), are a transit peptide targeting the chloroplast. The HXXXXD motif signature appears at 229–234 (HQSEAD).

It belongs to the GPAT/DAPAT family.

The protein localises to the plastid. Its subcellular location is the chloroplast stroma. It catalyses the reaction sn-glycerol 3-phosphate + an acyl-CoA = a 1-acyl-sn-glycero-3-phosphate + CoA. Its pathway is phospholipid metabolism; CDP-diacylglycerol biosynthesis; CDP-diacylglycerol from sn-glycerol 3-phosphate: step 1/3. Functionally, esterifies acyl-group from acyl-ACP to the sn-1 position of glycerol-3-phosphate. The enzyme from chilling-resistant plants discriminates against non-fluid palmitic acid and selects oleic acid whereas the enzyme from sensitive plants accepts both fatty acids. This is an oleate-selective acyltransferase. The polypeptide is Glycerol-3-phosphate acyltransferase, chloroplastic (ATS1) (Arabidopsis thaliana (Mouse-ear cress)).